A 242-amino-acid chain; its full sequence is Glucosamine-6-phosphate deaminase (242 aa).

Aspartate 67 serves as the catalytic Proton acceptor; for enolization step. Asparagine 137 serves as the catalytic For ring-opening step. The active-site Proton acceptor; for ring-opening step is the histidine 139. Catalysis depends on glutamate 144, which acts as the For ring-opening step.

This sequence belongs to the glucosamine/galactosamine-6-phosphate isomerase family. NagB subfamily.

The enzyme catalyses alpha-D-glucosamine 6-phosphate + H2O = beta-D-fructose 6-phosphate + NH4(+). It participates in amino-sugar metabolism; N-acetylneuraminate degradation; D-fructose 6-phosphate from N-acetylneuraminate: step 5/5. Functionally, catalyzes the reversible isomerization-deamination of glucosamine 6-phosphate (GlcN6P) to form fructose 6-phosphate (Fru6P) and ammonium ion. This is Glucosamine-6-phosphate deaminase from Staphylococcus haemolyticus (strain JCSC1435).